The primary structure comprises 368 residues: tRNA-specific 2-thiouridylase MnmA (368 aa).

Residues 12–19 (GMSGGVDS) and methionine 38 each bind ATP. The tract at residues 98–100 (NPD) is interaction with target base in tRNA. The active-site Nucleophile is cysteine 103. A disulfide bond links cysteine 103 and cysteine 200. ATP is bound at residue glycine 128. The segment at 150-152 (KDQ) is interaction with tRNA. The active-site Cysteine persulfide intermediate is cysteine 200. Positions 313–314 (RY) are interaction with tRNA.

It belongs to the MnmA/TRMU family. As to quaternary structure, interacts with TusE.

Its subcellular location is the cytoplasm. The enzyme catalyses S-sulfanyl-L-cysteinyl-[protein] + uridine(34) in tRNA + AH2 + ATP = 2-thiouridine(34) in tRNA + L-cysteinyl-[protein] + A + AMP + diphosphate + H(+). Catalyzes the 2-thiolation of uridine at the wobble position (U34) of tRNA(Lys), tRNA(Glu) and tRNA(Gln), leading to the formation of s(2)U34, the first step of tRNA-mnm(5)s(2)U34 synthesis. Sulfur is provided by IscS, via a sulfur-relay system. Binds ATP and its substrate tRNAs. This is tRNA-specific 2-thiouridylase MnmA from Pectobacterium carotovorum subsp. carotovorum (strain PC1).